Reading from the N-terminus, the 481-residue chain is Uridine 5'-monophosphate synthase (481 aa).

The tract at residues methionine 1 to leucine 214 is OPRTase. Position 37 is a phosphotyrosine (tyrosine 37). The segment at proline 215 to lysine 220 is domain linker. The OMPdecase stretch occupies residues alanine 221–glutamine 481. An orotidine 5'-phosphate-binding site is contributed by serine 257. UMP is bound by residues serine 257, aspartate 259, and lysine 281–histidine 283. Orotidine 5'-phosphate-binding positions include lysine 281, lysine 314, aspartate 317, threonine 321, serine 372, glutamine 430–tyrosine 432, and glycine 450–arginine 451. Residues lysine 314 and aspartate 317 each act as for OMPdecase activity in the active site. UMP contacts are provided by residues aspartate 317, threonine 321, serine 372, glutamine 430–tyrosine 432, and glycine 450–arginine 451.

The protein in the N-terminal section; belongs to the purine/pyrimidine phosphoribosyltransferase family. This sequence in the C-terminal section; belongs to the OMP decarboxylase family. Homodimer; dimerization is required for enzymatic activity.

It catalyses the reaction orotidine 5'-phosphate + diphosphate = orotate + 5-phospho-alpha-D-ribose 1-diphosphate. The enzyme catalyses orotidine 5'-phosphate + H(+) = UMP + CO2. Its pathway is pyrimidine metabolism; UMP biosynthesis via de novo pathway; UMP from orotate: step 1/2. It participates in pyrimidine metabolism; UMP biosynthesis via de novo pathway; UMP from orotate: step 2/2. In terms of biological role, bifunctional enzyme catalyzing the last two steps of de novo pyrimidine biosynthesis, orotate phosphoribosyltransferase (OPRT), which converts orotate to orotidine-5'-monophosphate (OMP), and orotidine-5'-monophosphate decarboxylase (ODC), the terminal enzymatic reaction that decarboxylates OMP to uridine monophosphate (UMP). The polypeptide is Uridine 5'-monophosphate synthase (Umps) (Mus musculus (Mouse)).